A 337-amino-acid chain; its full sequence is Glycerol-3-phosphate dehydrogenase [NAD(P)+] (337 aa).

Residues Trp-11, Arg-30, and Lys-102 each coordinate NADPH. 3 residues coordinate sn-glycerol 3-phosphate: Lys-102, Gly-138, and Ser-140. Ala-142 contributes to the NADPH binding site. Residues Lys-193, Asp-246, Ser-256, Arg-257, and Asn-258 each contribute to the sn-glycerol 3-phosphate site. Lys-193 (proton acceptor) is an active-site residue. NADPH is bound at residue Arg-257. Positions 281 and 283 each coordinate NADPH.

Belongs to the NAD-dependent glycerol-3-phosphate dehydrogenase family.

It is found in the cytoplasm. The catalysed reaction is sn-glycerol 3-phosphate + NAD(+) = dihydroxyacetone phosphate + NADH + H(+). The enzyme catalyses sn-glycerol 3-phosphate + NADP(+) = dihydroxyacetone phosphate + NADPH + H(+). The protein operates within membrane lipid metabolism; glycerophospholipid metabolism. Catalyzes the reduction of the glycolytic intermediate dihydroxyacetone phosphate (DHAP) to sn-glycerol 3-phosphate (G3P), the key precursor for phospholipid synthesis. The chain is Glycerol-3-phosphate dehydrogenase [NAD(P)+] from Variovorax paradoxus (strain S110).